Here is a 151-residue protein sequence, read N- to C-terminus: MTDNLTRAFKELLNQERFGSQSEIVDALKKQGFTGINQSKISRMLSKFGAVRTRNTKMEMVYCLPNELSVPNTSSPLKNLVLDVDHNAMLIVIKTTPGAAQLIARLLDSIGKSEGILGTIAGDDTIFVTPTNDKPIDELLQNIQRLFENTL.

Belongs to the ArgR family.

It is found in the cytoplasm. It functions in the pathway amino-acid biosynthesis; L-arginine biosynthesis [regulation]. Its function is as follows. Regulates arginine biosynthesis genes. The chain is Arginine repressor from Haemophilus influenzae (strain PittGG).